The following is a 1199-amino-acid chain: Pyruvate-flavodoxin oxidoreductase (1199 aa).

4Fe-4S ferredoxin-type domains are found at residues 699–728 (EIPV…AKVY) and 755–784 (FTIQ…EPSL). Residues Cys708, Cys711, Cys714, Cys718, Cys764, Cys767, Cys770, Cys774, Cys838, Cys841, Cys866, and Cys1103 each coordinate [4Fe-4S] cluster.

This sequence belongs to the pyruvate:ferredoxin/flavodoxin oxidoreductase family. Requires [4Fe-4S] cluster as cofactor.

It catalyses the reaction oxidized [flavodoxin] + pyruvate + CoA + 2 H(+) = reduced [flavodoxin] + acetyl-CoA + CO2. Functionally, oxidoreductase required for the transfer of electrons from pyruvate to flavodoxin, which reduces nitrogenase. This chain is Pyruvate-flavodoxin oxidoreductase (nifJ), found in Nostoc sp. (strain PCC 7120 / SAG 25.82 / UTEX 2576).